Consider the following 100-residue polypeptide: Large ribosomal subunit protein uL23 (100 aa).

It belongs to the universal ribosomal protein uL23 family. Part of the 50S ribosomal subunit. Contacts protein L29, and trigger factor when it is bound to the ribosome.

In terms of biological role, one of the early assembly proteins it binds 23S rRNA. One of the proteins that surrounds the polypeptide exit tunnel on the outside of the ribosome. Forms the main docking site for trigger factor binding to the ribosome. The polypeptide is Large ribosomal subunit protein uL23 (Photobacterium profundum (strain SS9)).